Reading from the N-terminus, the 161-residue chain is Endoribonuclease YbeY (161 aa).

Zn(2+) contacts are provided by histidine 121, histidine 125, and histidine 131.

It belongs to the endoribonuclease YbeY family. It depends on Zn(2+) as a cofactor.

The protein resides in the cytoplasm. In terms of biological role, single strand-specific metallo-endoribonuclease involved in late-stage 70S ribosome quality control and in maturation of the 3' terminus of the 16S rRNA. This chain is Endoribonuclease YbeY, found in Xanthomonas oryzae pv. oryzae (strain MAFF 311018).